A 51-amino-acid polypeptide reads, in one-letter code: MHTPIISETVQPKTAGLIVLGKASAETRGLSQGVEPDIGQTYFEESRINQD.

The propeptide occupies 1 to 28; the sequence is MHTPIISETVQPKTAGLIVLGKASAETR. Positions 29–37 form a cross-link, isoaspartyl glycine isopeptide (Gly-Asp); the sequence is GLSQGVEPD.

Post-translationally, this lasso peptide is probably hydrolyzed to a linear form by the isopeptidase AtxE1, in vivo.

Shows weak antimicrobial activity against its phylogenetic relative Caulobacter crescentus. Does not show activity against other bacteria tested (E.coli, Vibrio sp, Burkhoderia thailandensis, and Salmonella newport). This is Astexin-1 from Asticcacaulis excentricus (strain ATCC 15261 / DSM 4724 / KCTC 12464 / NCIMB 9791 / VKM B-1370 / CB 48).